Consider the following 552-residue polypeptide: Putative acetolactate synthase large subunit IlvB2 (552 aa).

Glutamate 48 serves as a coordination point for thiamine diphosphate. FAD contacts are provided by residues 262-285 and 309-328; these read FGDG…VGVS and DPDP…ITTS. The thiamine pyrophosphate binding stretch occupies residues 394-474; it reads TCISWTFRGI…VTWAVLNDGQ (81 aa). Aspartate 445 is a binding site for Mg(2+).

Belongs to the TPP enzyme family. In terms of assembly, heterodimer of large catalytic subunit and small regulatory subunit. It depends on Mg(2+) as a cofactor. Thiamine diphosphate serves as cofactor.

The catalysed reaction is 2 pyruvate + H(+) = (2S)-2-acetolactate + CO2. Its pathway is amino-acid biosynthesis; L-isoleucine biosynthesis; L-isoleucine from 2-oxobutanoate: step 1/4. It functions in the pathway amino-acid biosynthesis; L-valine biosynthesis; L-valine from pyruvate: step 1/4. In terms of biological role, catalyzes the conversion of 2 pyruvate molecules into acetolactate in the first common step of the biosynthetic pathway of the branched-amino acids such as leucine, isoleucine, and valine. The polypeptide is Putative acetolactate synthase large subunit IlvB2 (ilvB2) (Mycobacterium tuberculosis (strain ATCC 25618 / H37Rv)).